Consider the following 109-residue polypeptide: Putative transporter-like protein YIL171W (109 aa).

Positions 1-22 (MSGVNNTSANDLSTTESNSNSA) are enriched in polar residues. Residues 1 to 40 (MSGVNNTSANDLSTTESNSNSAVGAPSVKTEHGDSKDSLN) form a disordered region. Residues 1–56 (MSGVNNTSANDLSTTESNSNSAVGAPSVKTEHGDSKDSLNLDATEAPIDLPQKPLS) are Cytoplasmic-facing. Basic and acidic residues predominate over residues 29–39 (KTEHGDSKDSL). Residues 57 to 77 (AYTTVAILCLMIAFGGFIFGW) traverse the membrane as a helical segment. The Extracellular segment spans residues 78–109 (DTGTISGFVNLSDFIRRFGQKKTTRGLTTYRK). A glycan (N-linked (GlcNAc...) asparagine) is linked at Asn-87.

It belongs to the major facilitator superfamily. Sugar transporter (TC 2.A.1.1) family.

The protein resides in the cell membrane. Probable glucose transporter. The sequence is that of Putative transporter-like protein YIL171W from Saccharomyces cerevisiae (strain ATCC 204508 / S288c) (Baker's yeast).